Here is a 274-residue protein sequence, read N- to C-terminus: Insulin-like growth factor-binding protein-like 1 (274 aa).

The first 21 residues, 1 to 21 (MPRSPGLFLLLLVLQPLPALG), serve as a signal peptide directing secretion. The IGFBP N-terminal domain maps to 30–105 (RNPECGPCRP…PEGTGLCVCA (76 aa)). Intrachain disulfides connect Cys34/Cys59, Cys37/Cys61, Cys42/Cys62, Cys48/Cys65, Cys73/Cys87, Cys81/Cys102, and Cys111/Cys147. Residues 91 to 149 (AAGAAPEGTGLCVCAQRGSVCGSDGRSYPSVCALRLRARQAPRALPGHLHKARDGPCEF) enclose the Kazal-like domain. One can recognise an Ig-like C2-type domain in the interval 151-255 (PVVITPPQSV…GEAQSHGTVT (105 aa)). A glycan (N-linked (GlcNAc...) asparagine) is linked at Asn162. An intrachain disulfide couples Cys172 to Cys239.

Its subcellular location is the secreted. IGF-binding proteins prolong the half-life of IGFs and have been shown to either inhibit or stimulate the growth promoting effects of the IGFs in cell culture. They alter the interaction of IGFs with their cell surface receptors. This chain is Insulin-like growth factor-binding protein-like 1 (IGFBPL1), found in Bos taurus (Bovine).